The chain runs to 107 residues: Small ribosomal subunit protein uS10c (107 aa).

This sequence belongs to the universal ribosomal protein uS10 family. As to quaternary structure, part of the 30S ribosomal subunit.

It localises to the plastid. It is found in the chloroplast. Functionally, involved in the binding of tRNA to the ribosomes. The polypeptide is Small ribosomal subunit protein uS10c (Phaeodactylum tricornutum (strain CCAP 1055/1)).